Reading from the N-terminus, the 732-residue chain is Formin-homology and zinc finger domains protein 1 (732 aa).

Composition is skewed to low complexity over residues 1–12 (MMLASSAPTAPS), 19–45 (QPSA…SDAS), 121–137 (QQQQ…QSSS), and 240–251 (SSPKSPTSPTQP). An N-terminal signal peptide occupies residues 1 to 27 (MMLASSAPTAPSLLPPSSQPSAATTRA). 3 disordered regions span residues 1 to 45 (MMLA…SDAS), 121 to 141 (QQQQ…SDRK), and 232 to 267 (RGRP…RRNT). The segment covering 256–267 (SQASSLPSRRNT) has biased composition (polar residues). Residues 355–732 (PISLSSSIIP…DDHHINVSSP (378 aa)) form the FH2 domain.

Belongs to the formin homology family. In terms of tissue distribution, transiently expressed in all mesoderm derived progenitor body wall muscle cells before they differentiate.

In terms of biological role, acts redundantly with hlh-1 to promote body wall muscle cell and coelomocyte specification in postembryonic mesoderm progenitors, probably through suppression of sem-2. This Caenorhabditis elegans protein is Formin-homology and zinc finger domains protein 1.